A 388-amino-acid chain; its full sequence is Succinate--CoA ligase [ADP-forming] subunit beta (388 aa).

One can recognise an ATP-grasp domain in the interval K9 to H244. ATP contacts are provided by residues K46, G53–G55, E99, T102, and E107. Residues N199 and D213 each contribute to the Mg(2+) site. Residues N264 and G321–V323 each bind substrate.

This sequence belongs to the succinate/malate CoA ligase beta subunit family. In terms of assembly, heterotetramer of two alpha and two beta subunits. Mg(2+) serves as cofactor.

It carries out the reaction succinate + ATP + CoA = succinyl-CoA + ADP + phosphate. It catalyses the reaction GTP + succinate + CoA = succinyl-CoA + GDP + phosphate. It participates in carbohydrate metabolism; tricarboxylic acid cycle; succinate from succinyl-CoA (ligase route): step 1/1. Succinyl-CoA synthetase functions in the citric acid cycle (TCA), coupling the hydrolysis of succinyl-CoA to the synthesis of either ATP or GTP and thus represents the only step of substrate-level phosphorylation in the TCA. The beta subunit provides nucleotide specificity of the enzyme and binds the substrate succinate, while the binding sites for coenzyme A and phosphate are found in the alpha subunit. The sequence is that of Succinate--CoA ligase [ADP-forming] subunit beta from Shewanella sp. (strain ANA-3).